A 369-amino-acid polypeptide reads, in one-letter code: 3-dehydroquinate synthase (369 aa).

Residues 78-83 (DGERYK), 112-116 (GVIGD), 136-137 (TT), K149, K158, and 176-179 (TLTT) contribute to the NAD(+) site. Zn(2+)-binding residues include E191, H254, and H271.

It belongs to the sugar phosphate cyclases superfamily. Dehydroquinate synthase family. Requires NAD(+) as cofactor. It depends on Co(2+) as a cofactor. Zn(2+) is required as a cofactor.

It localises to the cytoplasm. It carries out the reaction 7-phospho-2-dehydro-3-deoxy-D-arabino-heptonate = 3-dehydroquinate + phosphate. It participates in metabolic intermediate biosynthesis; chorismate biosynthesis; chorismate from D-erythrose 4-phosphate and phosphoenolpyruvate: step 2/7. Its function is as follows. Catalyzes the conversion of 3-deoxy-D-arabino-heptulosonate 7-phosphate (DAHP) to dehydroquinate (DHQ). This chain is 3-dehydroquinate synthase, found in Nitrosomonas europaea (strain ATCC 19718 / CIP 103999 / KCTC 2705 / NBRC 14298).